The following is a 627-amino-acid chain: Capsid vertex component 2 (627 aa).

The interaction with major capsid protein/MCP stretch occupies residues 1 to 56; that stretch reads MFGRGLPPLKFGQIGGDGWSTVLADPGNRLIVANAHRSEPRLRVETLIREELLTSR. Positions 458-480 are disordered; that stretch reads LSGDGDPIRAPGSRPPAAAEATL.

It belongs to the herpesviridae CVC2 protein family. As to quaternary structure, heterodimerizes with CVC1. Interacts with major capsid protein/MCP and triplex capsid protein 1/TRX1 at the pentamer vertices. Interacts with the large tegument protein/LTP.

The protein localises to the virion. The protein resides in the host nucleus. Its function is as follows. Capsid vertex-specific component that plays a role during viral DNA encapsidation, assuring correct genome cleavage and presumably stabilizing capsids that contain full-length viral genomes. Participates in the interaction between the capsid and the tegument through interaction with the large tegument protein/LTP. The protein is Capsid vertex component 2 of Psittacid herpesvirus 1 (isolate Amazon parrot/-/97-0001/1997) (PsHV-1).